The primary structure comprises 78 residues: Conotoxin Cl14.9 (78 aa).

The signal sequence occupies residues 1–22 (MTAKATLLVLALVVMATSGVSS). The propeptide occupies 23–47 (ASVAGGPVVNSDTVSRSDPERLSTR). Residue isoleucine 70 is modified to Isoleucine amide. A propeptide spanning residues 74–78 (DITQQ) is cleaved from the precursor.

Contains 2 disulfide bonds. Expressed by the venom duct.

The protein resides in the secreted. The chain is Conotoxin Cl14.9 from Californiconus californicus (California cone).